A 337-amino-acid chain; its full sequence is F420-dependent glucose-6-phosphate dehydrogenase (337 aa).

D40 provides a ligand contact to coenzyme F420-(gamma-Glu)n. Residue H41 is the Proton donor of the active site. Coenzyme F420-(gamma-Glu)n-binding positions include T77 and 108 to 109; that span reads TG. E110 serves as the catalytic Proton acceptor. Residues N113, 178 to 179, and 181 to 182 each bind coenzyme F420-(gamma-Glu)n; these read GG and VV. Substrate is bound by residues T196, K199, K260, and R284.

The protein belongs to the F420-dependent glucose-6-phosphate dehydrogenase family. In terms of assembly, homodimer.

The catalysed reaction is oxidized coenzyme F420-(gamma-L-Glu)(n) + D-glucose 6-phosphate + H(+) = 6-phospho-D-glucono-1,5-lactone + reduced coenzyme F420-(gamma-L-Glu)(n). Functionally, catalyzes the coenzyme F420-dependent oxidation of glucose 6-phosphate (G6P) to 6-phosphogluconolactone. The polypeptide is F420-dependent glucose-6-phosphate dehydrogenase (Rhodococcus hoagii (strain 103S) (Rhodococcus equi)).